Reading from the N-terminus, the 78-residue chain is Small ribosomal subunit protein bS18 (78 aa).

The protein belongs to the bacterial ribosomal protein bS18 family. Part of the 30S ribosomal subunit. Forms a tight heterodimer with protein bS6.

Its function is as follows. Binds as a heterodimer with protein bS6 to the central domain of the 16S rRNA, where it helps stabilize the platform of the 30S subunit. The protein is Small ribosomal subunit protein bS18 of Levilactobacillus brevis (strain ATCC 367 / BCRC 12310 / CIP 105137 / JCM 1170 / LMG 11437 / NCIMB 947 / NCTC 947) (Lactobacillus brevis).